The sequence spans 130 residues: Histone H2A type 1-E (130 aa).

The segment at 1–22 (MSGRGKQGGKARAKAKTRSSRA) is disordered. Serine 2 is subject to N-acetylserine. Residue serine 2 is modified to Phosphoserine; by RPS6KA5. A Citrulline; alternate modification is found at arginine 4. Arginine 4 bears the Symmetric dimethylarginine; by PRMT5; alternate mark. Lysine 6 and lysine 10 each carry N6-(2-hydroxyisobutyryl)lysine; alternate. Residue lysine 6 is modified to N6-acetyllysine; alternate. The span at 7 to 19 (QGGKARAKAKTRS) shows a compositional bias: basic residues. Residue lysine 10 is modified to N6-lactoyllysine; alternate. Lysine 10 bears the N6-succinyllysine; alternate mark. Glycyl lysine isopeptide (Lys-Gly) (interchain with G-Cter in ubiquitin) cross-links involve residues lysine 14 and lysine 16. The residue at position 37 (lysine 37) is an N6-(2-hydroxyisobutyryl)lysine; alternate. Lysine 37 is modified (N6-(beta-hydroxybutyryl)lysine; alternate). Lysine 37 is subject to N6-crotonyllysine; alternate. An N6-(2-hydroxyisobutyryl)lysine mark is found at lysine 75 and lysine 76. Lysine 96 bears the N6-(2-hydroxyisobutyryl)lysine; alternate mark. Residue lysine 96 is modified to N6-succinyllysine; alternate. Lysine 96 is modified (N6-glutaryllysine; alternate). Glutamine 105 is subject to N5-methylglutamine. The residue at position 119 (lysine 119) is an N6-(2-hydroxyisobutyryl)lysine; alternate. 2 positions are modified to N6-crotonyllysine; alternate: lysine 119 and lysine 120. An N6-glutaryllysine; alternate mark is found at lysine 119 and lysine 120. Residue lysine 120 forms a Glycyl lysine isopeptide (Lys-Gly) (interchain with G-Cter in ubiquitin); alternate linkage. Threonine 121 bears the Phosphothreonine; by DCAF1 mark. An N6-crotonyllysine; alternate modification is found at lysine 126. Lysine 126 carries the post-translational modification N6-glutaryllysine; alternate.

The protein belongs to the histone H2A family. The nucleosome is a histone octamer containing two molecules each of H2A, H2B, H3 and H4 assembled in one H3-H4 heterotetramer and two H2A-H2B heterodimers. The octamer wraps approximately 147 bp of DNA. Deiminated on Arg-4 in granulocytes upon calcium entry. In terms of processing, monoubiquitination of Lys-120 (H2AK119Ub) by RING1, TRIM37 and RNF2/RING2 complex gives a specific tag for epigenetic transcriptional repression and participates in X chromosome inactivation of female mammals. It is involved in the initiation of both imprinted and random X inactivation. Ubiquitinated H2A is enriched in inactive X chromosome chromatin. Ubiquitination of H2A functions downstream of methylation of 'Lys-27' of histone H3 (H3K27me). H2AK119Ub by RNF2/RING2 can also be induced by ultraviolet and may be involved in DNA repair. Following DNA double-strand breaks (DSBs), it is ubiquitinated through 'Lys-63' linkage of ubiquitin moieties by the E2 ligase UBE2N and the E3 ligases RNF8 and RNF168, leading to the recruitment of repair proteins to sites of DNA damage. Ubiquitination at Lys-14 and Lys-16 (H2AK13Ub and H2AK15Ub, respectively) in response to DNA damage is initiated by RNF168 that mediates monoubiquitination at these 2 sites, and 'Lys-63'-linked ubiquitin are then conjugated to monoubiquitin; RNF8 is able to extend 'Lys-63'-linked ubiquitin chains in vitro. H2AK119Ub and ionizing radiation-induced 'Lys-63'-linked ubiquitination (H2AK13Ub and H2AK15Ub) are distinct events. Post-translationally, phosphorylation on Ser-2 (H2AS1ph) is enhanced during mitosis. Phosphorylation on Ser-2 by RPS6KA5/MSK1 directly represses transcription. Acetylation of H3 inhibits Ser-2 phosphorylation by RPS6KA5/MSK1. Phosphorylation at Thr-121 (H2AT120ph) by DCAF1 is present in the regulatory region of many tumor suppresor genes and down-regulates their transcription. Symmetric dimethylation on Arg-4 by the PRDM1/PRMT5 complex may play a crucial role in the germ-cell lineage. In terms of processing, glutamine methylation at Gln-105 (H2AQ104me) by FBL is specifically dedicated to polymerase I. It is present at 35S ribosomal DNA locus and impairs binding of the FACT complex. Post-translationally, crotonylation (Kcr) is specifically present in male germ cells and marks testis-specific genes in post-meiotic cells, including X-linked genes that escape sex chromosome inactivation in haploid cells. Crotonylation marks active promoters and enhancers and confers resistance to transcriptional repressors. It is also associated with post-meiotically activated genes on autosomes. Lactylated in macrophages by EP300/P300 by using lactoyl-CoA directly derived from endogenous or exogenous lactate, leading to stimulates gene transcription.

It is found in the nucleus. The protein resides in the chromosome. Core component of nucleosome. Nucleosomes wrap and compact DNA into chromatin, limiting DNA accessibility to the cellular machineries which require DNA as a template. Histones thereby play a central role in transcription regulation, DNA repair, DNA replication and chromosomal stability. DNA accessibility is regulated via a complex set of post-translational modifications of histones, also called histone code, and nucleosome remodeling. This Rattus norvegicus (Rat) protein is Histone H2A type 1-E.